The sequence spans 456 residues: Bifunctional protein GlmU (456 aa).

A pyrophosphorylase region spans residues 1–229 (MTKKALSAVI…VMEVEGANNR (229 aa)). Residues 11–14 (LAAG), Lys25, Gln76, 81–82 (GT), 103–105 (YGD), Gly140, Glu154, Asn169, and Asn227 contribute to the UDP-N-acetyl-alpha-D-glucosamine site. Residue Asp105 participates in Mg(2+) binding. Asn227 serves as a coordination point for Mg(2+). The segment at 230–250 (LQLAALERYLQNKQASKLLLE) is linker. The segment at 251–456 (GVMIYDPARF…QGWQRPIKKK (206 aa)) is N-acetyltransferase. UDP-N-acetyl-alpha-D-glucosamine is bound by residues Arg333 and Lys351. Residue His363 is the Proton acceptor of the active site. Tyr366 and Asn377 together coordinate UDP-N-acetyl-alpha-D-glucosamine. Acetyl-CoA contacts are provided by residues Ala380, 386 to 387 (NY), Ser405, Ala423, and Arg440.

In the N-terminal section; belongs to the N-acetylglucosamine-1-phosphate uridyltransferase family. This sequence in the C-terminal section; belongs to the transferase hexapeptide repeat family. As to quaternary structure, homotrimer. Mg(2+) serves as cofactor.

It localises to the cytoplasm. The catalysed reaction is alpha-D-glucosamine 1-phosphate + acetyl-CoA = N-acetyl-alpha-D-glucosamine 1-phosphate + CoA + H(+). It carries out the reaction N-acetyl-alpha-D-glucosamine 1-phosphate + UTP + H(+) = UDP-N-acetyl-alpha-D-glucosamine + diphosphate. It participates in nucleotide-sugar biosynthesis; UDP-N-acetyl-alpha-D-glucosamine biosynthesis; N-acetyl-alpha-D-glucosamine 1-phosphate from alpha-D-glucosamine 6-phosphate (route II): step 2/2. Its pathway is nucleotide-sugar biosynthesis; UDP-N-acetyl-alpha-D-glucosamine biosynthesis; UDP-N-acetyl-alpha-D-glucosamine from N-acetyl-alpha-D-glucosamine 1-phosphate: step 1/1. The protein operates within bacterial outer membrane biogenesis; LPS lipid A biosynthesis. Catalyzes the last two sequential reactions in the de novo biosynthetic pathway for UDP-N-acetylglucosamine (UDP-GlcNAc). The C-terminal domain catalyzes the transfer of acetyl group from acetyl coenzyme A to glucosamine-1-phosphate (GlcN-1-P) to produce N-acetylglucosamine-1-phosphate (GlcNAc-1-P), which is converted into UDP-GlcNAc by the transfer of uridine 5-monophosphate (from uridine 5-triphosphate), a reaction catalyzed by the N-terminal domain. The chain is Bifunctional protein GlmU from Haemophilus influenzae (strain PittEE).